Reading from the N-terminus, the 325-residue chain is mRNA decay factor CTH1 (325 aa).

2 C3H1-type zinc fingers span residues 204–232 (LYKTELCESFTIKGYCKYGNKCQFAHGLN) and 242–270 (NYRTKPCINWSKLGYCPYGKRCCFKHGDD). A disordered region spans residues 284–306 (SKDTALTPLPTSLAPSNNDNITN). A compositionally biased stretch (polar residues) spans 292–306 (LPTSLAPSNNDNITN).

In terms of biological role, binds to specific AU-rich elements (ARE) in the 3'-untranslated region of target mRNAs and promotes their degradation. In response to iron deficiency, promotes the decay of many mRNAs encoding proteins involved in iron-dependent pathways. Negatively regulates primarily iron-dependent mitochondrial processes including respiration and amino acid biosynthesis. This chain is mRNA decay factor CTH1 (CTH1), found in Saccharomyces cerevisiae (strain ATCC 204508 / S288c) (Baker's yeast).